The primary structure comprises 120 residues: MALNIEEIIASVKEASVLELNDLVKAIEEEFGVTAAAPVAVAAAGGGAAEQTEFTVELASAGDSKIKVIKVVREITGLGLKEAKELVDNAPKALKEGVAKDEAEEIKAKLEEVGANVEVK.

This sequence belongs to the bacterial ribosomal protein bL12 family. As to quaternary structure, homodimer. Part of the ribosomal stalk of the 50S ribosomal subunit. Forms a multimeric L10(L12)X complex, where L10 forms an elongated spine to which 2 to 4 L12 dimers bind in a sequential fashion. Binds GTP-bound translation factors.

Forms part of the ribosomal stalk which helps the ribosome interact with GTP-bound translation factors. Is thus essential for accurate translation. This Listeria innocua serovar 6a (strain ATCC BAA-680 / CLIP 11262) protein is Large ribosomal subunit protein bL12.